The sequence spans 153 residues: Histone H2B.3 (153 aa).

Residues 1 to 28 (MAPKADKKPAAKKPAEEEPATEKAEKAP) are compositionally biased toward basic and acidic residues. Residues 1–60 (MAPKADKKPAAKKPAEEEPATEKAEKAPAGKKPKAEKRLPAGKSAGKEGGEGKKGKKKAK) form a disordered region. Lys7 and Lys37 each carry N6-acetyllysine. Lys149 participates in a covalent cross-link: Glycyl lysine isopeptide (Lys-Gly) (interchain with G-Cter in ubiquitin).

The protein belongs to the histone H2B family. In terms of assembly, the nucleosome is a histone octamer containing two molecules each of H2A, H2B, H3 and H4 assembled in one H3-H4 heterotetramer and two H2A-H2B heterodimers. The octamer wraps approximately 147 bp of DNA. In terms of processing, can be acetylated to form H2BK6ac and H2BK33ac. Monoubiquitinated to form H2BK143ub1; may give a specific tag for epigenetic transcriptional activation.

The protein resides in the nucleus. Its subcellular location is the chromosome. Core component of nucleosome. Nucleosomes wrap and compact DNA into chromatin, limiting DNA accessibility to the cellular machineries which require DNA as a template. Histones thereby play a central role in transcription regulation, DNA repair, DNA replication and chromosomal stability. DNA accessibility is regulated via a complex set of post-translational modifications of histones, also called histone code, and nucleosome remodeling. The protein is Histone H2B.3 of Zea mays (Maize).